Consider the following 237-residue polypeptide: Uridylate kinase (237 aa).

An ATP-binding site is contributed by 11–14 (KLSG). A UMP-binding site is contributed by glycine 53. Residues glycine 54 and arginine 58 each contribute to the ATP site. Residues aspartate 73 and 134–141 (TGNPFFTT) each bind UMP. ATP-binding residues include threonine 161, tyrosine 167, and aspartate 170.

The protein belongs to the UMP kinase family. As to quaternary structure, homohexamer.

The protein localises to the cytoplasm. It carries out the reaction UMP + ATP = UDP + ADP. It functions in the pathway pyrimidine metabolism; CTP biosynthesis via de novo pathway; UDP from UMP (UMPK route): step 1/1. With respect to regulation, inhibited by UTP. In terms of biological role, catalyzes the reversible phosphorylation of UMP to UDP. The sequence is that of Uridylate kinase from Burkholderia mallei (strain NCTC 10247).